A 160-amino-acid chain; its full sequence is Ribosome maturation factor RimP (160 aa).

Belongs to the RimP family.

It localises to the cytoplasm. Required for maturation of 30S ribosomal subunits. This is Ribosome maturation factor RimP from Symbiobacterium thermophilum (strain DSM 24528 / JCM 14929 / IAM 14863 / T).